The chain runs to 215 residues: HTH-type transcriptional repressor FabR (215 aa).

The HTH tetR-type domain occupies 10 to 70 (KTRRSLVEAA…TMVDESGLML (61 aa)). The segment at residues 33–52 (SLREVAREAVIAPTSFYRHF) is a DNA-binding region (H-T-H motif).

Homodimer.

It localises to the cytoplasm. In terms of biological role, represses the transcription of fabB, involved in unsaturated fatty acid (UFA) biosynthesis. By controlling UFA production, FabR directly influences the physical properties of the membrane bilayer. This is HTH-type transcriptional repressor FabR from Escherichia coli (strain K12 / MC4100 / BW2952).